Consider the following 188-residue polypeptide: dCTP deaminase (188 aa).

Residues lysine 111–arginine 116, threonine 135–glutamate 137, glutamine 156, tyrosine 170, and glutamine 180 contribute to the dCTP site. The Proton donor/acceptor role is filled by glutamate 137.

The protein belongs to the dCTP deaminase family. Homotrimer.

The catalysed reaction is dCTP + H2O + H(+) = dUTP + NH4(+). The protein operates within pyrimidine metabolism; dUMP biosynthesis; dUMP from dCTP (dUTP route): step 1/2. Functionally, catalyzes the deamination of dCTP to dUTP. The chain is dCTP deaminase from Laribacter hongkongensis (strain HLHK9).